The sequence spans 83 residues: Cytochrome b559 subunit alpha (83 aa).

A helical membrane pass occupies residues 22–36; sequence VIHAVTLPAIFLAGF. Histidine 24 is a binding site for heme.

The protein belongs to the PsbE/PsbF family. As to quaternary structure, heterodimer of an alpha subunit and a beta subunit. PSII is composed of 1 copy each of membrane proteins PsbA, PsbB, PsbC, PsbD, PsbE, PsbF, PsbH, PsbI, PsbJ, PsbK, PsbL, PsbM, PsbT, PsbX, PsbY, PsbZ, Psb30/Ycf12, peripheral proteins PsbO, CyanoQ (PsbQ), PsbU, PsbV and a large number of cofactors. It forms dimeric complexes. Heme b serves as cofactor.

The protein resides in the cellular thylakoid membrane. In terms of biological role, this b-type cytochrome is tightly associated with the reaction center of photosystem II (PSII). PSII is a light-driven water:plastoquinone oxidoreductase that uses light energy to abstract electrons from H(2)O, generating O(2) and a proton gradient subsequently used for ATP formation. It consists of a core antenna complex that captures photons, and an electron transfer chain that converts photonic excitation into a charge separation. The chain is Cytochrome b559 subunit alpha from Synechococcus sp. (strain RCC307).